The sequence spans 326 residues: Transcription initiation factor IIB (326 aa).

Residues 26 to 57 (DVEVCPECGSPRLIRDYRRGEFICQDCGLVIE) form a TFIIB-type zinc finger. Positions 30, 33, 49, and 52 each coordinate Zn(2+). 2 consecutive repeat copies span residues 143–226 (SELD…TREL) and 237–318 (DYIP…ELAE).

Belongs to the TFIIB family.

Stabilizes TBP binding to an archaeal box-A promoter. Also responsible for recruiting RNA polymerase II to the pre-initiation complex (DNA-TBP-TFIIB). The polypeptide is Transcription initiation factor IIB (Archaeoglobus fulgidus (strain ATCC 49558 / DSM 4304 / JCM 9628 / NBRC 100126 / VC-16)).